The following is a 294-amino-acid chain: tRNA dimethylallyltransferase (294 aa).

10-17 (GPTAVGKT) serves as a coordination point for ATP. 12–17 (TAVGKT) provides a ligand contact to substrate. The tract at residues 35–38 (DSQQ) is interaction with substrate tRNA.

It belongs to the IPP transferase family. Monomer. The cofactor is Mg(2+).

It carries out the reaction adenosine(37) in tRNA + dimethylallyl diphosphate = N(6)-dimethylallyladenosine(37) in tRNA + diphosphate. Catalyzes the transfer of a dimethylallyl group onto the adenine at position 37 in tRNAs that read codons beginning with uridine, leading to the formation of N6-(dimethylallyl)adenosine (i(6)A). The chain is tRNA dimethylallyltransferase from Streptococcus pneumoniae (strain Hungary19A-6).